Reading from the N-terminus, the 251-residue chain is MRILIILSIILCSLSIRADLEYVDNEIYNYNGGSNENGCVEVYDPYEKFNRKVFVFNSVLDYIILRPLAVGYKNITNDYVKARVNSFVSNVDTPLTAINYGLQLNYDKTMKSVWRFLINTTLGIGGLFDVAGKVGLPSDRQTFGSTLAHYGVAPGPYLVLPIIGSTNARDMTDSVITNYALNPLMYYTHNDFDLGVLAVSKINDRYVVLPFSDYVMKNSTDPYVAIRSALHRVREASVQYPENFKCPKPKN.

Positions 1–18 (MRILIILSIILCSLSIRA) are cleaved as a signal peptide.

The protein belongs to the MlaA family.

This is an uncharacterized protein from Rickettsia conorii (strain ATCC VR-613 / Malish 7).